Reading from the N-terminus, the 469-residue chain is Adenosylhomocysteinase (469 aa).

The substrate site is built by T63, D139, and E164. 165–167 (TTT) serves as a coordination point for NAD(+). Residues K194 and D198 each coordinate substrate. NAD(+) contacts are provided by residues N199, 228-233 (GYGDVG), E251, N300, 321-323 (IGH), and N375.

The protein belongs to the adenosylhomocysteinase family. It depends on NAD(+) as a cofactor.

The protein localises to the cytoplasm. It carries out the reaction S-adenosyl-L-homocysteine + H2O = L-homocysteine + adenosine. It functions in the pathway amino-acid biosynthesis; L-homocysteine biosynthesis; L-homocysteine from S-adenosyl-L-homocysteine: step 1/1. Its function is as follows. May play a key role in the regulation of the intracellular concentration of adenosylhomocysteine. In Pseudomonas putida (strain W619), this protein is Adenosylhomocysteinase.